The sequence spans 579 residues: Zinc finger-containing ubiquitin peptidase 1 (579 aa).

Residues 2-25 (LSCDICGETVSSEPDMKAHLLIVH) form a C2H2-type 1 zinc finger. The C2H2-type 2; atypical zinc-finger motif lies at 30-53 (VICPFCKLSGVNYDEMCFHIETAH). 2 C2H2-type zinc fingers span residues 155 to 178 (PECPFCGKIEDNSQDMETHVKTKH) and 194 to 216 (YDCPMCGLVCTNYHILQEHVDLH). An MIU region spans residues 227–249 (NRVQCSRDLELAQQLQQEEDRKR). A zUBD/ZHA region spans residues 250–275 (RSEESRQEMEEFQKLQRQYGLDNSGG). Lysine 263 carries the N6-acetyllysine modification. Cysteine 361 functions as the Nucleophile in the catalytic mechanism. Catalysis depends on histidine 492, which acts as the Proton acceptor. Residue aspartate 513 is part of the active site.

The protein belongs to the peptidase C78 family. ZUFSP subfamily. Interacts with RPA1 and RPA2.

Its subcellular location is the cytoplasm. It is found in the nucleus. The enzyme catalyses Thiol-dependent hydrolysis of ester, thioester, amide, peptide and isopeptide bonds formed by the C-terminal Gly of ubiquitin (a 76-residue protein attached to proteins as an intracellular targeting signal).. Its function is as follows. Deubiquitinase with endodeubiquitinase activity that specifically interacts with and cleaves 'Lys-63'-linked long polyubiquitin chains. Shows only weak activity against 'Lys-11' and 'Lys-48'-linked chains. Plays an important role in genome stability pathways, functioning to prevent spontaneous DNA damage and also promote cellular survival in response to exogenous DNA damage. Modulates the ubiquitination status of replication protein A (RPA) complex proteins in response to replication stress. The sequence is that of Zinc finger-containing ubiquitin peptidase 1 from Bos taurus (Bovine).